Here is a 256-residue protein sequence, read N- to C-terminus: Thiazole synthase (256 aa).

Lys-95 acts as the Schiff-base intermediate with DXP in catalysis. Residues Gly-156, 182-183, and 204-205 each bind 1-deoxy-D-xylulose 5-phosphate; these read AG and NT.

This sequence belongs to the ThiG family. In terms of assembly, homotetramer. Forms heterodimers with either ThiH or ThiS.

Its subcellular location is the cytoplasm. The catalysed reaction is [ThiS sulfur-carrier protein]-C-terminal-Gly-aminoethanethioate + 2-iminoacetate + 1-deoxy-D-xylulose 5-phosphate = [ThiS sulfur-carrier protein]-C-terminal Gly-Gly + 2-[(2R,5Z)-2-carboxy-4-methylthiazol-5(2H)-ylidene]ethyl phosphate + 2 H2O + H(+). The protein operates within cofactor biosynthesis; thiamine diphosphate biosynthesis. Its function is as follows. Catalyzes the rearrangement of 1-deoxy-D-xylulose 5-phosphate (DXP) to produce the thiazole phosphate moiety of thiamine. Sulfur is provided by the thiocarboxylate moiety of the carrier protein ThiS. In vitro, sulfur can be provided by H(2)S. In Escherichia coli O8 (strain IAI1), this protein is Thiazole synthase.